The sequence spans 245 residues: Putative outer membrane protein RBE_0022 (245 aa).

Positions 1–23 (MIRMSKRLGVILFVSCISINSFA) are cleaved as a signal peptide.

The protein belongs to the OmpW/AlkL family.

The protein localises to the cell outer membrane. The chain is Putative outer membrane protein RBE_0022 from Rickettsia bellii (strain RML369-C).